A 355-amino-acid polypeptide reads, in one-letter code: Alkanal monooxygenase alpha chain (355 aa).

The protein belongs to the bacterial luciferase oxidoreductase family. As to quaternary structure, heterodimer of an alpha and a beta chain.

The catalysed reaction is a long-chain fatty aldehyde + FMNH2 + O2 = a long-chain fatty acid + hnu + FMN + H2O + 2 H(+). Its function is as follows. Light-emitting reaction in luminous bacteria. The chain is Alkanal monooxygenase alpha chain (luxA) from Vibrio harveyi (Beneckea harveyi).